The primary structure comprises 124 residues: Histone H2B, embryonic (124 aa).

A disordered region spans residues 1–31; the sequence is MAPTAQVAKKGSKKAVKGTKTAXGGKKRNRK. The O-linked (GlcNAc) serine glycan is linked to serine 111. A Glycyl lysine isopeptide (Lys-Gly) (interchain with G-Cter in ubiquitin) cross-link involves residue lysine 119.

The protein belongs to the histone H2B family. The nucleosome is a histone octamer containing two molecules each of H2A, H2B, H3 and H4 assembled in one H3-H4 heterotetramer and two H2A-H2B heterodimers. The octamer wraps approximately 147 bp of DNA. In terms of processing, monoubiquitination of Lys-119 gives a specific tag for epigenetic transcriptional activation and is also prerequisite for histone H3 'Lys-4' and 'Lys-79' methylation. GlcNAcylation at Ser-111 promotes monoubiquitination of Lys-119. It fluctuates in response to extracellular glucose, and associates with transcribed genes.

It localises to the nucleus. Its subcellular location is the chromosome. Its function is as follows. Core component of nucleosome. Nucleosomes wrap and compact DNA into chromatin, limiting DNA accessibility to the cellular machineries which require DNA as a template. Histones thereby play a central role in transcription regulation, DNA repair, DNA replication and chromosomal stability. DNA accessibility is regulated via a complex set of post-translational modifications of histones, also called histone code, and nucleosome remodeling. This chain is Histone H2B, embryonic, found in Strongylocentrotus purpuratus (Purple sea urchin).